We begin with the raw amino-acid sequence, 352 residues long: Chorismate synthase (352 aa).

NADP(+) is bound by residues Arg48 and Arg54. Residues 125-127 (RAS), 238-239 (NA), Ala278, 293-297 (KPASS), and Arg319 contribute to the FMN site.

This sequence belongs to the chorismate synthase family. In terms of assembly, homotetramer. The cofactor is FMNH2.

It carries out the reaction 5-O-(1-carboxyvinyl)-3-phosphoshikimate = chorismate + phosphate. It participates in metabolic intermediate biosynthesis; chorismate biosynthesis; chorismate from D-erythrose 4-phosphate and phosphoenolpyruvate: step 7/7. Catalyzes the anti-1,4-elimination of the C-3 phosphate and the C-6 proR hydrogen from 5-enolpyruvylshikimate-3-phosphate (EPSP) to yield chorismate, which is the branch point compound that serves as the starting substrate for the three terminal pathways of aromatic amino acid biosynthesis. This reaction introduces a second double bond into the aromatic ring system. In Coxiella burnetii (strain RSA 493 / Nine Mile phase I), this protein is Chorismate synthase.